The chain runs to 160 residues: uncharacterized protein (160 aa).

The protein belongs to the Dps family.

This is an uncharacterized protein from Haemophilus influenzae (strain ATCC 51907 / DSM 11121 / KW20 / Rd).